Here is a 389-residue protein sequence, read N- to C-terminus: Apoptosis inhibitor U19 (389 aa).

This sequence belongs to the beta-herpesvirinae UL38 protein family. As to quaternary structure, interacts with host MDM2; this interaction leads to the stabilization of host TP53.

The protein localises to the host cytoplasm. It is found in the host nucleus. In terms of biological role, plays a role in the inhibition of host apoptosis to facilitate efficient viral replication. Promotes stabilization and inactivation of host TP53 through interaction with host MDM2. The sequence is that of Apoptosis inhibitor U19 (U19) from Homo sapiens (Human).